The following is a 274-amino-acid chain: Large ribosomal subunit protein uL2 (274 aa).

Residues 223–274 (VVMNPVDHPHGGGEGRTSGGRHPVSPWGVPTKGFKTRKNKRTDKYIVRRRTK) are disordered. A compositionally biased stretch (basic residues) spans 256–274 (FKTRKNKRTDKYIVRRRTK).

It belongs to the universal ribosomal protein uL2 family. In terms of assembly, part of the 50S ribosomal subunit. Forms a bridge to the 30S subunit in the 70S ribosome.

Its function is as follows. One of the primary rRNA binding proteins. Required for association of the 30S and 50S subunits to form the 70S ribosome, for tRNA binding and peptide bond formation. It has been suggested to have peptidyltransferase activity; this is somewhat controversial. Makes several contacts with the 16S rRNA in the 70S ribosome. This is Large ribosomal subunit protein uL2 from Vibrio atlanticus (strain LGP32) (Vibrio splendidus (strain Mel32)).